The primary structure comprises 133 residues: Small ribosomal subunit protein uS8 (133 aa).

This sequence belongs to the universal ribosomal protein uS8 family. In terms of assembly, part of the 30S ribosomal subunit. Contacts proteins S5 and S12.

Its function is as follows. One of the primary rRNA binding proteins, it binds directly to 16S rRNA central domain where it helps coordinate assembly of the platform of the 30S subunit. The chain is Small ribosomal subunit protein uS8 from Chlamydia pneumoniae (Chlamydophila pneumoniae).